We begin with the raw amino-acid sequence, 120 residues long: Large ribosomal subunit protein bL12 (120 aa).

Belongs to the bacterial ribosomal protein bL12 family. In terms of assembly, homodimer. Part of the ribosomal stalk of the 50S ribosomal subunit. Forms a multimeric L10(L12)X complex, where L10 forms an elongated spine to which 2 to 4 L12 dimers bind in a sequential fashion. Binds GTP-bound translation factors.

Forms part of the ribosomal stalk which helps the ribosome interact with GTP-bound translation factors. Is thus essential for accurate translation. The chain is Large ribosomal subunit protein bL12 from Listeria monocytogenes serotype 4b (strain CLIP80459).